We begin with the raw amino-acid sequence, 377 residues long: Chaperone protein DnaJ (377 aa).

The J domain maps to 3–67; that stretch reads DYYDLLGVGR…QTRARYDQFG (65 aa). A CR-type zinc finger spans residues 133–215; the sequence is GQEQEIKIPH…CGGQGVRQVR (83 aa). Zn(2+) contacts are provided by cysteine 146, cysteine 149, cysteine 163, cysteine 166, cysteine 189, cysteine 192, cysteine 203, and cysteine 206. CXXCXGXG motif repeat units follow at residues 146–153, 163–170, 189–196, and 203–210; these read CDTCGGSG, CGTCGGAG, CPNCGGTG, and CNACGGQG.

Belongs to the DnaJ family. In terms of assembly, homodimer. It depends on Zn(2+) as a cofactor.

It is found in the cytoplasm. In terms of biological role, participates actively in the response to hyperosmotic and heat shock by preventing the aggregation of stress-denatured proteins and by disaggregating proteins, also in an autonomous, DnaK-independent fashion. Unfolded proteins bind initially to DnaJ; upon interaction with the DnaJ-bound protein, DnaK hydrolyzes its bound ATP, resulting in the formation of a stable complex. GrpE releases ADP from DnaK; ATP binding to DnaK triggers the release of the substrate protein, thus completing the reaction cycle. Several rounds of ATP-dependent interactions between DnaJ, DnaK and GrpE are required for fully efficient folding. Also involved, together with DnaK and GrpE, in the DNA replication of plasmids through activation of initiation proteins. The sequence is that of Chaperone protein DnaJ from Parasynechococcus marenigrum (strain WH8102).